Here is a 211-residue protein sequence, read N- to C-terminus: LexA repressor (211 aa).

The segment at residues 27-47 (QTEIARAFGFKGVRAAQYHLE) is a DNA-binding region (H-T-H motif). Active-site for autocatalytic cleavage activity residues include serine 131 and lysine 168.

It belongs to the peptidase S24 family. In terms of assembly, homodimer.

The catalysed reaction is Hydrolysis of Ala-|-Gly bond in repressor LexA.. Represses a number of genes involved in the response to DNA damage (SOS response), including recA and lexA. In the presence of single-stranded DNA, RecA interacts with LexA causing an autocatalytic cleavage which disrupts the DNA-binding part of LexA, leading to derepression of the SOS regulon and eventually DNA repair. The protein is LexA repressor of Stenotrophomonas maltophilia (strain R551-3).